A 585-amino-acid polypeptide reads, in one-letter code: Pentatricopeptide repeat-containing protein At4g21170 (585 aa).

12 PPR repeats span residues 152–186, 187–221, 222–247, 252–286, 287–321, 324–358, 360–394, 396–431, 432–466, 467–501, 502–534, and 538–572; these read LSVSLSLVLEYYALKGSHHNGLEVFGFMRRLRLSP, SQSAYNSLLGSLVKENQFRVALCLYSAMVRNGIVS, DELTWDLIAQILCEQGRSKSVFKLME, SCKIYTNLVECYSRNGEFDAVFSLIHEMDDKKLEL, SFCSYGCVLDDACRLGDAEFIDKVLCLMVEKKFVT, DSAVNDKIIERLCDMGKTFASEMLFRKACNGETVR, WDSTYGCMLKALSRKKRTKEAVDVYRMICRKGITV, DESCYIEFANALCRDDNSSEEEEELLVDVIKRGFVP, CTHKLSEVLASMCRKRRWKSAEKLLDSVMEMEVYF, DSFACGLLMERYCRSGKLEKALVLHEKIKKMKGSL, DVNAYNAVLDRLMMRQKEMVEEAVVVFEYMKEI, and NSKSFTIMIQGLCRVKEMKKAMRSHDEMLRLGLKP.

Belongs to the PPR family. P subfamily.

In Arabidopsis thaliana (Mouse-ear cress), this protein is Pentatricopeptide repeat-containing protein At4g21170.